Here is a 1199-residue protein sequence, read N- to C-terminus: DNA-directed RNA polymerase subunit beta' (1199 aa).

Positions 60, 62, 75, and 78 each coordinate Zn(2+). Residues Asp-449, Asp-451, and Asp-453 each contribute to the Mg(2+) site. 4 residues coordinate Zn(2+): Cys-818, Cys-892, Cys-899, and Cys-902.

The protein belongs to the RNA polymerase beta' chain family. The RNAP catalytic core consists of 2 alpha, 1 beta, 1 beta' and 1 omega subunit. When a sigma factor is associated with the core the holoenzyme is formed, which can initiate transcription. Mg(2+) serves as cofactor. It depends on Zn(2+) as a cofactor.

It catalyses the reaction RNA(n) + a ribonucleoside 5'-triphosphate = RNA(n+1) + diphosphate. In terms of biological role, DNA-dependent RNA polymerase catalyzes the transcription of DNA into RNA using the four ribonucleoside triphosphates as substrates. The sequence is that of DNA-directed RNA polymerase subunit beta' from Exiguobacterium sibiricum (strain DSM 17290 / CCUG 55495 / CIP 109462 / JCM 13490 / 255-15).